We begin with the raw amino-acid sequence, 605 residues long: Capsid scaffolding protein (605 aa).

Residues histidine 48, serine 116, and histidine 139 each act as charge relay system in the active site. The disordered stretch occupies residues 235 to 274 (ASDAPDLQKPDKALQSPPPASTDPATMLSGNAGEGATACG). The segment at 281-300 (QDLISVPRNTFMTLLQTNLD) is interaction with pAP. 2 disordered regions span residues 403-431 (DYVP…FPGE) and 489-588 (PHQS…KSVS). Positions 410–416 (RSNKRKR) match the Nuclear localization signal motif. Positions 568–579 (ASASGVAQSKEP) are enriched in polar residues. Residues 585–605 (KSVSAHLKSIFCEELLNKRVA) form an interaction with major capsid protein region.

This sequence belongs to the herpesviridae capsid scaffolding protein family. In terms of assembly, homomultimer. Interacts with major capsid protein. Exists in a monomer-dimer equilibrium with the dimer being the active species. Capsid scaffolding protein is cleaved by assemblin after formation of the spherical procapsid. As a result, the capsid obtains its mature, icosahedral shape. Cleavages occur at two or more sites: release (R-site) and maturation (M-site).

It localises to the host cytoplasm. The protein resides in the host nucleus. It catalyses the reaction Cleaves -Ala-|-Ser- and -Ala-|-Ala- bonds in the scaffold protein.. Acts as a scaffold protein by binding major capsid protein in the cytoplasm, inducing the nuclear localization of both proteins. Multimerizes in the nucleus such as major capsid protein forms the icosahedral T=16 capsid. Autocatalytic cleavage releases the assembly protein, and subsequently abolishes interaction with major capsid protein. Cleavages products are evicted from the capsid before or during DNA packaging. In terms of biological role, protease that plays an essential role in virion assembly within the nucleus. Catalyzes the cleavage of the assembly protein after formation of the spherical procapsid. By that cleavage, the capsid matures and gains its icosahedral shape. The cleavage sites seem to include -Ala-Ser-, -Ala-Ala-, as well as Ala-Thr bonds. Assemblin and cleavages products are evicted from the capsid before or during DNA packaging. Its function is as follows. Plays a major role in capsid assembly. Acts as a scaffold protein by binding major capsid protein. Multimerizes in the nucleus such as major capsid protein forms the icosahedral T=16 capsid. Cleaved by assemblin after capsid completion. The cleavages products are evicted from the capsid before or during DNA packaging. The polypeptide is Capsid scaffolding protein (Homo sapiens (Human)).